We begin with the raw amino-acid sequence, 134 residues long: Replication enhancer protein (134 aa).

This sequence belongs to the geminiviridae replication enhancer protein family. Homooligomer. Interacts with the replication-associated protein (REP). Interacts with host proliferating cell nuclear antigen (PCNA). Interacts with host retinoblastoma-related protein 1 (RBR1), and may thereby deregulate the host cell cycle. Oligomerization and interaction with PCNA are necessary for optimal replication enhancement.

Functionally, increases viral DNA accumulation. Enhances infectivity and symptom expression. This Cynanchum acutum (Tomato) protein is Replication enhancer protein.